The following is a 623-amino-acid chain: DNA-directed RNA polymerase subunit gamma (623 aa).

C70, C72, C85, and C88 together coordinate Zn(2+). Residues D466, D468, and D470 each coordinate Mg(2+).

The protein belongs to the RNA polymerase beta' chain family. RpoC1 subfamily. As to quaternary structure, in cyanobacteria the RNAP catalytic core is composed of 2 alpha, 1 beta, 1 beta', 1 gamma and 1 omega subunit. When a sigma factor is associated with the core the holoenzyme is formed, which can initiate transcription. It depends on Mg(2+) as a cofactor. The cofactor is Zn(2+).

It catalyses the reaction RNA(n) + a ribonucleoside 5'-triphosphate = RNA(n+1) + diphosphate. Functionally, DNA-dependent RNA polymerase catalyzes the transcription of DNA into RNA using the four ribonucleoside triphosphates as substrates. The protein is DNA-directed RNA polymerase subunit gamma of Acaryochloris marina (strain MBIC 11017).